Here is a 473-residue protein sequence, read N- to C-terminus: Ribulose bisphosphate carboxylase large chain (473 aa).

Positions 116 and 166 each coordinate substrate. Residue lysine 168 is the Proton acceptor of the active site. Lysine 170 contacts substrate. Mg(2+)-binding residues include lysine 194, aspartate 196, and glutamate 197. Lysine 194 is subject to N6-carboxylysine. Catalysis depends on histidine 287, which acts as the Proton acceptor. 3 residues coordinate substrate: arginine 288, histidine 320, and serine 372.

This sequence belongs to the RuBisCO large chain family. Type I subfamily. In terms of assembly, heterohexadecamer of 8 large chains and 8 small chains. It depends on Mg(2+) as a cofactor.

The enzyme catalyses 2 (2R)-3-phosphoglycerate + 2 H(+) = D-ribulose 1,5-bisphosphate + CO2 + H2O. The catalysed reaction is D-ribulose 1,5-bisphosphate + O2 = 2-phosphoglycolate + (2R)-3-phosphoglycerate + 2 H(+). Its function is as follows. RuBisCO catalyzes two reactions: the carboxylation of D-ribulose 1,5-bisphosphate, the primary event in carbon dioxide fixation, as well as the oxidative fragmentation of the pentose substrate. Both reactions occur simultaneously and in competition at the same active site. This is Ribulose bisphosphate carboxylase large chain from Alkalilimnicola ehrlichii (strain ATCC BAA-1101 / DSM 17681 / MLHE-1).